We begin with the raw amino-acid sequence, 263 residues long: P29 (263 aa).

Basic and acidic residues predominate over residues 30 to 39 (VPEGLRDISK). The interval 30 to 93 (VPEGLRDISK…PKQKQLAPPI (64 aa)) is disordered. Over residues 52–64 (LSRASARPQQLQP) the composition is skewed to polar residues.

The protein is P29 (p29) of Citrus sinensis (Sweet orange).